A 370-amino-acid chain; its full sequence is D-alanine--D-alanine ligase (370 aa).

In terms of domain architecture, ATP-grasp spans 144-352 (KKIFADAGIP…YGALIERLVD (209 aa)). 177–232 (EEVLTYPVFVKPANLGSSVGISKATNKKELVDAMTEAFLYDRRVVVEQGVVAREIE) provides a ligand contact to ATP. 3 residues coordinate Mg(2+): D306, E319, and N321.

Belongs to the D-alanine--D-alanine ligase family. Mg(2+) serves as cofactor. Requires Mn(2+) as cofactor.

It localises to the cytoplasm. The catalysed reaction is 2 D-alanine + ATP = D-alanyl-D-alanine + ADP + phosphate + H(+). It functions in the pathway cell wall biogenesis; peptidoglycan biosynthesis. Cell wall formation. The sequence is that of D-alanine--D-alanine ligase from Listeria monocytogenes serovar 1/2a (strain ATCC BAA-679 / EGD-e).